A 338-amino-acid polypeptide reads, in one-letter code: tRNA N6-adenosine threonylcarbamoyltransferase (338 aa).

2 residues coordinate Fe cation: His-111 and His-115. Residues 134–138, Asp-167, Gly-180, Asp-184, and Asn-272 each bind substrate; that span reads VVSGG. Asp-300 contributes to the Fe cation binding site.

It belongs to the KAE1 / TsaD family. The cofactor is Fe(2+).

The protein localises to the cytoplasm. It catalyses the reaction L-threonylcarbamoyladenylate + adenosine(37) in tRNA = N(6)-L-threonylcarbamoyladenosine(37) in tRNA + AMP + H(+). Functionally, required for the formation of a threonylcarbamoyl group on adenosine at position 37 (t(6)A37) in tRNAs that read codons beginning with adenine. Is involved in the transfer of the threonylcarbamoyl moiety of threonylcarbamoyl-AMP (TC-AMP) to the N6 group of A37, together with TsaE and TsaB. TsaD likely plays a direct catalytic role in this reaction. The protein is tRNA N6-adenosine threonylcarbamoyltransferase of Syntrophus aciditrophicus (strain SB).